Here is a 616-residue protein sequence, read N- to C-terminus: Chaperone protein HtpG (616 aa).

The interval 1 to 334 is a; substrate-binding; the sequence is MAEKQIHTFQ…TADLPLNVSR (334 aa). The tract at residues 335–549 is b; that stretch reads EILQGNKVVD…ENEMGGNMER (215 aa). The c stretch occupies residues 550 to 616; sequence IMKSLGQDVP…FVKRINKLIN (67 aa).

Belongs to the heat shock protein 90 family. Homodimer.

It localises to the cytoplasm. Functionally, molecular chaperone. Has ATPase activity. The polypeptide is Chaperone protein HtpG (Ruthia magnifica subsp. Calyptogena magnifica).